A 465-amino-acid chain; its full sequence is Argininosuccinate lyase (465 aa).

Belongs to the lyase 1 family. Argininosuccinate lyase subfamily.

It is found in the cytoplasm. It carries out the reaction 2-(N(omega)-L-arginino)succinate = fumarate + L-arginine. The protein operates within amino-acid biosynthesis; L-arginine biosynthesis; L-arginine from L-ornithine and carbamoyl phosphate: step 3/3. The polypeptide is Argininosuccinate lyase (Halorhodospira halophila (strain DSM 244 / SL1) (Ectothiorhodospira halophila (strain DSM 244 / SL1))).